Reading from the N-terminus, the 77-residue chain is Major pilus subunit operon regulatory protein (77 aa).

This sequence to E.coli AfaF and DaaF.

In terms of biological role, plays a role in the inhibition of methylation at the GATC1028 site located in the regulatory region upstream of the pabA promoter. May, in conjunction with the Mbf (methylation blocking factor), inhibits deoxyadenosine methylase from methylating the GATC1028 site. This is Major pilus subunit operon regulatory protein (papI) from Escherichia coli.